Here is a 128-residue protein sequence, read N- to C-terminus: Serum amyloid A-4 protein (128 aa).

Positions 1–18 (MKLFIGLIFCSLVMGVSS) are cleaved as a signal peptide. Residues 93-128 (SSEREEDQVSNRRAEEWGRSGQDPDHFRPAGLPKKY) form a disordered region. Residues 99–120 (DQVSNRRAEEWGRSGQDPDHFR) show a composition bias toward basic and acidic residues.

It belongs to the SAA family. As to quaternary structure, apolipoprotein of the HDL complex.

The protein resides in the secreted. Major acute phase reactant. The chain is Serum amyloid A-4 protein from Sus scrofa (Pig).